The sequence spans 651 residues: Sodium/potassium/calcium exchanger 2 (651 aa).

Residues 1-38 are Cytoplasmic-facing; it reads MALCKKTVGSVLEEWCLNEPLFGCKRHQNVRKKLRLIR. The helical transmembrane segment at 39–59 threads the bilayer; the sequence is IIGLLVSVVAISTFSLSISAF. The Extracellular portion of the chain corresponds to 60–134; the sequence is FKMETHSTVL…DLFSLEERRK (75 aa). The disordered stretch occupies residues 92–123; sequence QNEGSTPDSPTSMKHEAEHDNATEEHSKGEYP. Positions 93 to 103 are enriched in polar residues; that stretch reads NEGSTPDSPTS. Residues 104 to 122 are compositionally biased toward basic and acidic residues; sequence MKHEAEHDNATEEHSKGEY. Asparagine 112 is a glycosylation site (N-linked (GlcNAc...) asparagine). A helical transmembrane segment spans residues 135-155; the sequence is GAVILHVIGMIYMFIALAIVC. The Cytoplasmic portion of the chain corresponds to 156-179; the sequence is DEFFVPSLTVITEKLSISDDVAGA. An Alpha-1 repeat occupies 176–216; it reads VAGATFMAAGGSAPELFTSLIGVFISHSNVGIGTIVGSAVF. A helical membrane pass occupies residues 180 to 200; that stretch reads TFMAAGGSAPELFTSLIGVFI. The Extracellular portion of the chain corresponds to 201 to 206; it reads SHSNVG. A helical membrane pass occupies residues 207-227; that stretch reads IGTIVGSAVFNILFVIGMCAL. Over 228–245 the chain is Cytoplasmic; sequence FSREILNLTWWPLFRDVS. Residues 246–266 traverse the membrane as a helical segment; it reads FYIVDLILLIIFFLDNLIMWW. Over 267–459 the chain is Extracellular; sequence ESLTLLTAYF…SLAWPDTPRK (193 aa). The span at 304–322 shows a compositional bias: basic and acidic residues; that stretch reads ATTGDAEGKSPTAGDKDDQ. Positions 304–338 are disordered; sequence ATTGDAEGKSPTAGDKDDQTLTTKPRLQRGGSSAS. Residues 323–338 show a composition bias toward polar residues; it reads TLTTKPRLQRGGSSAS. The chain crosses the membrane as a helical span at residues 460 to 480; the sequence is QLTYLLVLPIVFPLWVSLPDV. The Cytoplasmic segment spans residues 481 to 487; sequence RNPRSRK. A helical membrane pass occupies residues 488 to 508; sequence FFPITFFGSISWIAFFSYLMV. The Extracellular portion of the chain corresponds to 509–523; sequence WWAHQVGETIGISEE. A helical membrane pass occupies residues 524 to 544; that stretch reads IMGLTILAAGTSIPDLITSVI. Residues 531-562 form an Alpha-2 repeat; the sequence is AAGTSIPDLITSVIVARKGLGDMAVSSSVGSN. Over 545–562 the chain is Cytoplasmic; the sequence is VARKGLGDMAVSSSVGSN. Residues 563–583 traverse the membrane as a helical segment; sequence IFDITVGLPLPWLLYAVINNF. Residues 584-592 lie on the Extracellular side of the membrane; it reads SPVTVSSNG. A helical membrane pass occupies residues 593–613; the sequence is LFCAIVLLFIMLLFVILSIAF. Over 614-620 the chain is Cytoplasmic; it reads CKWRMNK. Residues 621–641 traverse the membrane as a helical segment; sequence FLGFLMFGLYFVFLIVSVLLE. The Extracellular segment spans residues 642–651; the sequence is DKVIQCPVSI.

The protein belongs to the Ca(2+):cation antiporter (CaCA) (TC 2.A.19) family. SLC24A subfamily. In terms of tissue distribution, retinal cones. Found in the cone inner segment layer and in a subpopulation of ganglion cells.

It is found in the cell membrane. It catalyses the reaction Ca(2+)(out) + K(+)(out) + 4 Na(+)(in) = Ca(2+)(in) + K(+)(in) + 4 Na(+)(out). Its function is as follows. Calcium, potassium:sodium antiporter that transports 1 Ca(2+) and 1 K(+) in exchange for 4 Na(+). Required for learming and memory by regulating neuronal Ca(2+), which is essential for the development of synaptic plasticity. The protein is Sodium/potassium/calcium exchanger 2 (SLC24A2) of Gallus gallus (Chicken).